The following is a 102-amino-acid chain: Carboxysome shell protein CcmK2 (102 aa).

Residues 4–90 form the BMC domain; it reads AVGMIETRGF…PHENLEYVLP (87 aa).

The protein belongs to the bacterial microcompartments protein family. CcmK subfamily. In terms of assembly, homohexamer. Stacked hexamers, with the concave faces together, have also been crystallized. Interacts preferentially with itself, then with CcmK1 and CcmK4a in vitro. May interact with CcmL, this occurs at very high CcmK2 concentrations. Interacts with CcmN and CcmO in the carboxysome.

The protein localises to the carboxysome. Its function is as follows. Probably the major shell protein of the carboxysome, a polyhedral inclusion where RuBisCO (ribulose bisphosphate carboxylase, rbcL-rbcS) is sequestered. Assembles into hexamers which make sheets that form the facets of the polyhedral carboxysome. The hexamer central pore probably regulates metabolite flux. In Thermosynechococcus vestitus (strain NIES-2133 / IAM M-273 / BP-1), this protein is Carboxysome shell protein CcmK2.